A 1142-amino-acid polypeptide reads, in one-letter code: Fibronectin type-III domain-containing protein 3A (1142 aa).

The interval 104-191 (YGDVDAHSTH…KSGKGKGGTQ (88 aa)) is disordered. Basic and acidic residues predominate over residues 107 to 145 (VDAHSTHGRSNFRDERSSKTYERLQKKLKDRQGTQKDKM). Over residues 146-158 (SSPPSSPQKCPSP) the composition is skewed to low complexity. A phosphoserine mark is found at Ser-147, Ser-151, and Ser-157. Fibronectin type-III domains follow at residues 212–313 (NIVK…TLSC), 317–409 (IPNP…TSGC), 413–506 (MPAS…TCPD), 510–604 (IPVK…TPAV), 608–701 (PCLP…TAPG), 705–795 (QCKP…TPPS), 805–894 (EISD…TKPL), 895–989 (PPDP…TPKS), and 990–1095 (VPAA…TEPP). The residue at position 328 (Lys-328) is an N6-acetyllysine. Residues 1121-1141 (NLVLFAFFSILIAFIIQYFVI) traverse the membrane as a helical segment.

This sequence belongs to the FNDC3 family.

It is found in the golgi apparatus membrane. Mediates spermatid-Sertoli adhesion during spermatogenesis. This is Fibronectin type-III domain-containing protein 3A (FNDC3A) from Pongo abelii (Sumatran orangutan).